A 110-amino-acid chain; its full sequence is Late cornified envelope protein 2C (110 aa).

The segment covering 1-10 (MSCQQNQQQC) has biased composition (low complexity). Positions 1-23 (MSCQQNQQQCQPPPKCPPKCTPK) are disordered. Pro residues predominate over residues 11 to 23 (QPPPKCPPKCTPK).

The protein belongs to the LCE family. In terms of assembly, interacts with CYSRT1; the interaction is direct. As to expression, skin-specific. Expression was readily detected in adult trunk skin, adult arm skin, fetal skin, penal skin, vulva, esophagus and tongue. Not expressed in the cervix, rectum, lung, colon, or placenta.

Precursors of the cornified envelope of the stratum. This chain is Late cornified envelope protein 2C (LCE2C), found in Homo sapiens (Human).